Reading from the N-terminus, the 207-residue chain is V-type ATP synthase subunit D (207 aa).

Belongs to the V-ATPase D subunit family.

Produces ATP from ADP in the presence of a proton gradient across the membrane. The sequence is that of V-type ATP synthase subunit D from Streptococcus gordonii (strain Challis / ATCC 35105 / BCRC 15272 / CH1 / DL1 / V288).